The chain runs to 263 residues: Indole-3-glycerol phosphate synthase (263 aa).

The protein belongs to the TrpC family.

The catalysed reaction is 1-(2-carboxyphenylamino)-1-deoxy-D-ribulose 5-phosphate + H(+) = (1S,2R)-1-C-(indol-3-yl)glycerol 3-phosphate + CO2 + H2O. Its pathway is amino-acid biosynthesis; L-tryptophan biosynthesis; L-tryptophan from chorismate: step 4/5. The polypeptide is Indole-3-glycerol phosphate synthase (Aliarcobacter butzleri (strain RM4018) (Arcobacter butzleri)).